A 901-amino-acid polypeptide reads, in one-letter code: Cyanophycin synthetase (901 aa).

Residues Lys-224–Phe-478 enclose the ATP-grasp domain. Gly-493–Thr-499 lines the ATP pocket.

This sequence in the C-terminal section; belongs to the MurCDEF family. As to quaternary structure, homodimer.

It catalyses the reaction [L-4-(L-arginin-2-N-yl)aspartate](n) + L-aspartate + ATP = [L-4-(L-arginin-2-N-yl)aspartate](n)-L-aspartate + ADP + phosphate + H(+). The catalysed reaction is [L-4-(L-arginin-2-N-yl)aspartate](n)-L-aspartate + L-arginine + ATP = [L-4-(L-arginin-2-N-yl)aspartate](n+1) + ADP + phosphate + H(+). Functionally, catalyzes the ATP-dependent polymerization of arginine and aspartate to multi-L-arginyl-poly-L-aspartic acid (cyanophycin; a water-insoluble reserve polymer). The polypeptide is Cyanophycin synthetase (cphA) (Nostoc sp. (strain PCC 7120 / SAG 25.82 / UTEX 2576)).